Consider the following 199-residue polypeptide: FMN-dependent NADH:quinone oxidoreductase 2 (199 aa).

FMN is bound by residues S10, 16 to 18 (SVS), and 96 to 99 (MYNF).

This sequence belongs to the azoreductase type 1 family. As to quaternary structure, homodimer. FMN is required as a cofactor.

The catalysed reaction is 2 a quinone + NADH + H(+) = 2 a 1,4-benzosemiquinone + NAD(+). It catalyses the reaction N,N-dimethyl-1,4-phenylenediamine + anthranilate + 2 NAD(+) = 2-(4-dimethylaminophenyl)diazenylbenzoate + 2 NADH + 2 H(+). Its function is as follows. Quinone reductase that provides resistance to thiol-specific stress caused by electrophilic quinones. In terms of biological role, also exhibits azoreductase activity. Catalyzes the reductive cleavage of the azo bond in aromatic azo compounds to the corresponding amines. The chain is FMN-dependent NADH:quinone oxidoreductase 2 from Pseudomonas fluorescens (strain Pf0-1).